Here is a 335-residue protein sequence, read N- to C-terminus: UPF0353 protein Mjls_2492 (335 aa).

A run of 2 helical transmembrane segments spans residues 18–38 (WFFL…IVAL) and 67–87 (LPAI…AGPT). Residues 98–294 (VVMLVIDVSQ…EQLREVYANL (197 aa)) form the VWFA domain. A helical transmembrane segment spans residues 309-329 (VGWLRLGALVLALSALAALLL).

This sequence belongs to the UPF0353 family.

The protein resides in the cell membrane. The chain is UPF0353 protein Mjls_2492 from Mycobacterium sp. (strain JLS).